The following is a 144-amino-acid chain: 3-dehydroquinate dehydratase (144 aa).

The active-site Proton acceptor is Y22. Substrate is bound by residues N73, H79, and D86. The active-site Proton donor is H99. Residues 100-101 (IS) and R110 contribute to the substrate site.

This sequence belongs to the type-II 3-dehydroquinase family. In terms of assembly, homododecamer.

The enzyme catalyses 3-dehydroquinate = 3-dehydroshikimate + H2O. It participates in metabolic intermediate biosynthesis; chorismate biosynthesis; chorismate from D-erythrose 4-phosphate and phosphoenolpyruvate: step 3/7. In terms of biological role, catalyzes a trans-dehydration via an enolate intermediate. The protein is 3-dehydroquinate dehydratase of Mycobacteroides abscessus (strain ATCC 19977 / DSM 44196 / CCUG 20993 / CIP 104536 / JCM 13569 / NCTC 13031 / TMC 1543 / L948) (Mycobacterium abscessus).